The chain runs to 261 residues: Ribosome biogenesis protein nsa2 (261 aa).

Basic and acidic residues-rich tracts occupy residues 1–36 and 66–82; these read MPQN…HKQS and KQHE…EKDP. Disordered stretches follow at residues 1 to 44 and 64 to 97; these read MPQN…NLRG and AIKQ…SNPT. The Nuclear localization signal signature appears at 15–22; the sequence is GKRLDTEE.

This sequence belongs to the eukaryotic ribosomal protein eS8 family. Ribosome biogenesis protein NSA2 subfamily. In terms of assembly, component of the pre-66S ribosomal particle. Interacts with nop7 and rrp1. Interacts with rsa4 (via WD repeats).

The protein resides in the nucleus. It localises to the nucleolus. Involved in the biogenesis of the 60S ribosomal subunit. May play a part in the quality control of pre-60S particles. The chain is Ribosome biogenesis protein nsa2 (rbg-52) from Neurospora crassa (strain ATCC 24698 / 74-OR23-1A / CBS 708.71 / DSM 1257 / FGSC 987).